We begin with the raw amino-acid sequence, 253 residues long: 5'-nucleotidase SurE (253 aa).

A divalent metal cation-binding residues include D8, D9, S39, and N95.

Belongs to the SurE nucleotidase family. The cofactor is a divalent metal cation.

The protein localises to the cytoplasm. The enzyme catalyses a ribonucleoside 5'-phosphate + H2O = a ribonucleoside + phosphate. Functionally, nucleotidase that shows phosphatase activity on nucleoside 5'-monophosphates. The sequence is that of 5'-nucleotidase SurE from Chloroflexus aggregans (strain MD-66 / DSM 9485).